The sequence spans 1354 residues: Rho-associated protein kinase 1 (1354 aa).

Ser2 is modified (N-acetylserine). The 263-residue stretch at 76 to 338 (YEVVKVIGRG…VEEIKRHLFF (263 aa)) folds into the Protein kinase domain. ATP is bound by residues 82–90 (IGRGAFGEV) and Lys105. Residue Asp198 is the Proton acceptor of the active site. The AGC-kinase C-terminal domain maps to 341–409 (DQWAWETLRD…YSNRRYLSSA (69 aa)). The tract at residues 368-727 (FDDLEEDKGE…KKLKEEREAR (360 aa)) is interaction with FHOD1. Residues 422–692 (KSLQESLQKT…RLEQEVNEHK (271 aa)) adopt a coiled-coil conformation. Residues 479 to 556 (STVSQIEKEK…LEEANDLLRT (78 aa)) form the REM-1 domain. Lys647 bears the N6-acetyllysine mark. An SHROOM3 binding region spans residues 707–946 (EAKSVAMCEM…TVSRLEEANS (240 aa)). The RhoBD domain maps to 949-1015 (TKDIEILRRE…LAEIMNRKDF (67 aa)). Residues 998–1010 (LKTQAVNKLAEIM) form an RHOA binding region. Residues 1011-1102 (NRKDFKIDRK…KLLDLSDSTS (92 aa)) adopt a coiled-coil conformation. Phosphoserine is present on residues Ser1105 and Ser1108. The tract at residues 1115-1354 (NLPESRIEGW…VVKNTSGKTS (240 aa)) is auto-inhibitory. Residues 1118 to 1317 (ESRIEGWLSV…WVTHLVKKIP (200 aa)) enclose the PH domain. A Phorbol-ester/DAG-type zinc finger spans residues 1228 to 1281 (GHEFIPTLYHFPANCDACAKPLWHVFKPPPALECRRCHVKCHRDHLDKKEDLIC). The tract at residues 1320–1354 (PPSGFVRASPRTLSTRSTANQSFRKVVKNTSGKTS) is disordered. Position 1328 is a phosphoserine (Ser1328). Polar residues predominate over residues 1330–1354 (RTLSTRSTANQSFRKVVKNTSGKTS).

Belongs to the protein kinase superfamily. AGC Ser/Thr protein kinase family. As to quaternary structure, homodimer. Interacts with RHOB, RHOC, MYLC2B and PTEN. Interacts with ITGB1BP1 (via N-terminus and PTB domain). Interacts with RHOA (activated by GTP), CHORDC1, DAPK3, GEM, JIP3, RHOE, PPP1R12A, PFN1, LIMK1, LIMK2 and TSG101. Interacts with FHOD1 in a Src-dependent manner. Interacts with SHROOM3. Requires Mg(2+) as cofactor. Post-translationally, autophosphorylated on serine and threonine residues. Cleaved by caspase-3 during apoptosis. This leads to constitutive activation of the kinase and membrane blebbing. In terms of tissue distribution, detected in blood platelets.

The protein resides in the cytoplasm. It is found in the cytoskeleton. Its subcellular location is the microtubule organizing center. The protein localises to the centrosome. It localises to the centriole. The protein resides in the golgi apparatus membrane. It is found in the cell projection. Its subcellular location is the bleb. The protein localises to the cell membrane. It localises to the lamellipodium. The protein resides in the ruffle. The catalysed reaction is L-seryl-[protein] + ATP = O-phospho-L-seryl-[protein] + ADP + H(+). The enzyme catalyses L-threonyl-[protein] + ATP = O-phospho-L-threonyl-[protein] + ADP + H(+). Activated by RHOA binding. Inhibited by Y-27632. Protein kinase which is a key regulator of the actin cytoskeleton and cell polarity. Involved in regulation of smooth muscle contraction, actin cytoskeleton organization, stress fiber and focal adhesion formation, neurite retraction, cell adhesion and motility via phosphorylation of DAPK3, GFAP, LIMK1, LIMK2, MYL9/MLC2, TPPP, PFN1 and PPP1R12A. Phosphorylates FHOD1 and acts synergistically with it to promote SRC-dependent non-apoptotic plasma membrane blebbing. Phosphorylates JIP3 and regulates the recruitment of JNK to JIP3 upon UVB-induced stress. Acts as a suppressor of inflammatory cell migration by regulating PTEN phosphorylation and stability. Acts as a negative regulator of VEGF-induced angiogenic endothelial cell activation. Required for centrosome positioning and centrosome-dependent exit from mitosis. Plays a role in terminal erythroid differentiation. Inhibits podocyte motility via regulation of actin cytoskeletal dynamics and phosphorylation of CFL1. Promotes keratinocyte terminal differentiation. Involved in osteoblast compaction through the fibronectin fibrillogenesis cell-mediated matrix assembly process, essential for osteoblast mineralization. May regulate closure of the eyelids and ventral body wall by inducing the assembly of actomyosin bundles. The polypeptide is Rho-associated protein kinase 1 (ROCK1) (Homo sapiens (Human)).